A 130-amino-acid polypeptide reads, in one-letter code: Ribosome-binding factor A (130 aa).

This sequence belongs to the RbfA family. In terms of assembly, monomer. Binds 30S ribosomal subunits, but not 50S ribosomal subunits or 70S ribosomes.

It is found in the cytoplasm. Functionally, one of several proteins that assist in the late maturation steps of the functional core of the 30S ribosomal subunit. Associates with free 30S ribosomal subunits (but not with 30S subunits that are part of 70S ribosomes or polysomes). Required for efficient processing of 16S rRNA. May interact with the 5'-terminal helix region of 16S rRNA. The sequence is that of Ribosome-binding factor A from Lachnospira eligens (strain ATCC 27750 / DSM 3376 / VPI C15-48 / C15-B4) (Eubacterium eligens).